We begin with the raw amino-acid sequence, 90 residues long: Small ribosomal subunit protein uS17 (90 aa).

Belongs to the universal ribosomal protein uS17 family. Part of the 30S ribosomal subunit.

Its function is as follows. One of the primary rRNA binding proteins, it binds specifically to the 5'-end of 16S ribosomal RNA. The chain is Small ribosomal subunit protein uS17 from Treponema denticola (strain ATCC 35405 / DSM 14222 / CIP 103919 / JCM 8153 / KCTC 15104).